A 345-amino-acid polypeptide reads, in one-letter code: uncharacterized protein (345 aa).

Solcar repeat units follow at residues 80-153 (MSFF…MKSR), 162-246 (SDPQ…LKLK), and 256-339 (NLAH…ILNF). 6 helical membrane passes run 83–103 (FEALGAGICAGLAVDLSLFPI), 128–148 (GLGSILVGSAPGASLFFTTYE), 220–240 (AGYGITIAREIPFTLIQFPIW), 262–282 (AISGSIAGGIAAALTTPFDVV), 296–316 (VFTIKSIVAHEGFLALYKGIV), and 319–339 (VLWLSGGGAIFLGCYDVILNF).

This sequence belongs to the mitochondrial carrier (TC 2.A.29) family.

It localises to the mitochondrion inner membrane. This is an uncharacterized protein from Schizosaccharomyces pombe (strain 972 / ATCC 24843) (Fission yeast).